The sequence spans 625 residues: tRNA uridine 5-carboxymethylaminomethyl modification enzyme MnmG (625 aa).

Residue 14–19 (GAGHAG) participates in FAD binding. Position 273–287 (273–287 (GPRYCPSIEDKIVRF)) interacts with NAD(+).

Belongs to the MnmG family. As to quaternary structure, homodimer. Heterotetramer of two MnmE and two MnmG subunits. FAD serves as cofactor.

The protein localises to the cytoplasm. In terms of biological role, NAD-binding protein involved in the addition of a carboxymethylaminomethyl (cmnm) group at the wobble position (U34) of certain tRNAs, forming tRNA-cmnm(5)s(2)U34. This chain is tRNA uridine 5-carboxymethylaminomethyl modification enzyme MnmG, found in Clostridium botulinum (strain Loch Maree / Type A3).